We begin with the raw amino-acid sequence, 478 residues long: Subtilisin-like protease 3 (478 aa).

Positions 1-17 are cleaved as a signal peptide; that stretch reads MKFSTILPILWANCCLC. In terms of domain architecture, Inhibitor I9 spans 70–167; sequence RYVIVFNEDI…FVEQETTVKI (98 aa). The 302-residue stretch at 177–478 folds into the Peptidase S8 domain; the sequence is PWGLHRVSHR…GGGKKLDGFW (302 aa). Catalysis depends on charge relay system residues Asp213, His245, and Ser407.

Belongs to the peptidase S8 family.

Functionally, serine protease with unknown substrate. The polypeptide is Subtilisin-like protease 3 (YSP3) (Saccharomyces cerevisiae (strain ATCC 204508 / S288c) (Baker's yeast)).